A 480-amino-acid polypeptide reads, in one-letter code: UDP-N-acetylmuramate--L-alanine ligase (480 aa).

ATP is bound at residue 126–132; sequence GTHGKTT.

This sequence belongs to the MurCDEF family.

The protein localises to the cytoplasm. It catalyses the reaction UDP-N-acetyl-alpha-D-muramate + L-alanine + ATP = UDP-N-acetyl-alpha-D-muramoyl-L-alanine + ADP + phosphate + H(+). It functions in the pathway cell wall biogenesis; peptidoglycan biosynthesis. In terms of biological role, cell wall formation. In Blochmanniella pennsylvanica (strain BPEN), this protein is UDP-N-acetylmuramate--L-alanine ligase.